Reading from the N-terminus, the 380-residue chain is MFLKAVVLSLALVAVTGAEAEVNADQVATVIWDYFSQLGNNAKKAVEHIQKSELTQQLNTLFQDKLGEVSTYTDDLQKKLVPFATELHERLTKDSEKLKEEIRKELEDLRARLLPHATEVSQKIGDNVRELQQRLGPYAEELRTQVDTQAQQLRRQLTPYVERMEKVMRQNLDQLQASLAPYAEELQATVNQRVEELKGRLTPYADQLQTKIEENVEELRRSLAPYAQDVQGKLNHQLEGLAFQMKKHAEELKAKISAKAEELRQGLVPLVNSVHGSQLGNAEDLQKSLAELSSRLDQQVEDFRRTVGPYGETFNKAMVQQLDTLRQKLGPLAGDVEDHLSFLEKDLRDKVSSFFNTLKEKESQAPALPAQEEMPVPLGG.

Residues 1-20 form the signal peptide; sequence MFLKAVVLSLALVAVTGAEA. 13 repeat units span residues 33-54, 60-81, 82-103, 115-136, 137-158, 159-180, 181-202, 203-224, 225-246, 247-268, 269-286, 287-308, and 309-330. The 13 X 22 AA approximate tandem repeats stretch occupies residues 33–330; that stretch reads DYFSQLGNNA…QLDTLRQKLG (298 aa). The interval 361 to 380 is disordered; it reads KESQAPALPAQEEMPVPLGG.

The protein belongs to the apolipoprotein A1/A4/E family. In terms of assembly, homodimer. As to expression, secreted in plasma.

It is found in the secreted. Its function is as follows. May have a role in chylomicrons and VLDL secretion and catabolism. Required for efficient activation of lipoprotein lipase by ApoC-II; potent activator of LCAT. Apoa-IV is a major component of HDL and chylomicrons. The protein is Apolipoprotein A-IV (APOA4) of Bos taurus (Bovine).